Here is a 354-residue protein sequence, read N- to C-terminus: MRFDLEPPSSVAAAHRTGVLLINLGTPDAPTPRAVRRYLAEFLSDPRVVEIPQVVWQVLLRTLILPLRGRASAKKYAAVWMPEGSPLRVYTERQTEGVRHLLASNAYQVTVDYAMRYGSPNIAQALAQFKRAGVERVLLMPMYPQYSASTTATAFDAAFAALARMRNQPEVRTVRQYADHPAYIHALAEQVRQYWAQHGRPDFAAGDKLVLSFHGVPKRTLDLGDPYHDQCQQTGALLMAALGLSTLECRVTFQSRFGKAEWLQPYTAPTLRELGAAGVRRADVFCPGFTADCLETIEEIGMEVRDEFIAGGGQAFHRIPCLNGAHAWIGALGEIVAENLQGWPVKAAQPDMVN.

Fe cation-binding residues include His214 and Glu295.

The protein belongs to the ferrochelatase family.

The protein localises to the cytoplasm. It carries out the reaction heme b + 2 H(+) = protoporphyrin IX + Fe(2+). It participates in porphyrin-containing compound metabolism; protoheme biosynthesis; protoheme from protoporphyrin-IX: step 1/1. Catalyzes the ferrous insertion into protoporphyrin IX. The sequence is that of Ferrochelatase from Burkholderia ambifaria (strain ATCC BAA-244 / DSM 16087 / CCUG 44356 / LMG 19182 / AMMD) (Burkholderia cepacia (strain AMMD)).